The following is a 182-amino-acid chain: UPF0398 protein RBAM_020340 (182 aa).

It belongs to the UPF0398 family.

In Bacillus velezensis (strain DSM 23117 / BGSC 10A6 / LMG 26770 / FZB42) (Bacillus amyloliquefaciens subsp. plantarum), this protein is UPF0398 protein RBAM_020340.